The sequence spans 72 residues: Small ribosomal subunit protein eS17 (72 aa).

Belongs to the eukaryotic ribosomal protein eS17 family.

This Nanoarchaeum equitans (strain Kin4-M) protein is Small ribosomal subunit protein eS17.